The chain runs to 634 residues: ATP-dependent clpX-like chaperone, mitochondrial (634 aa).

The N-terminal 56 residues, 1–56, are a transit peptide targeting the mitochondrion; the sequence is MSSCGACTCGAAAARLLTTSLTSAQRGISCGRIHVPVLGRLGTTLDAQALRRAPLR. A disordered region spans residues 69 to 102; that stretch reads DGANKDGSGDGNKKSVTEGSSKKSGSGNSGKGGN. Over residues 70–84 the composition is skewed to basic and acidic residues; that stretch reads GANKDGSGDGNKKSV. Positions 85–94 are enriched in low complexity; the sequence is TEGSSKKSGS. Residues 94-147 form the ClpX-type ZB domain; sequence SGNSGKGGNQLRCPKCGDLCTHVETFVSSTRFVKCEKCHHFFVVLSEADSKKSI. Cys-106, Cys-109, Cys-128, and Cys-131 together coordinate Zn(2+). Residue 295–302 coordinates ATP; the sequence is PTGSGKTL. Residue Lys-438 is modified to N6-acetyllysine. A compositionally biased stretch (basic and acidic residues) spans 599 to 611; sequence KEPGYIRAPSKES. Positions 599–634 are disordered; sequence KEPGYIRAPSKESSEEEYDSGVEEDGWPRQADAANS. The segment covering 612-623 has biased composition (acidic residues); it reads SEEEYDSGVEED. Residue Ser-618 is modified to Phosphoserine.

This sequence belongs to the ClpX chaperone family. As to quaternary structure, homohexamer that forms a ring structure; this hexamerization requires ATP binding. Component of the ClpXP complex formed by the assembly of two CLPP heptameric rings with two CLPX hexameric rings, giving rise to a symmetrical structure with two central CLPP rings flanked by a CLPX ring at either end of the complex. Interacts with TFAM. In terms of tissue distribution, detected in liver (at protein level).

Its subcellular location is the mitochondrion. It localises to the mitochondrion matrix. The protein resides in the mitochondrion nucleoid. The enzyme catalyses ATP + H2O = ADP + phosphate + H(+). In terms of biological role, ATP-dependent chaperone that functions as an unfoldase. As part of the ClpXP protease complex, it recognizes specific protein substrates, unfolds them using energy derived from ATP hydrolysis, and then translocates them to the proteolytic subunit (CLPP) of the ClpXP complex for degradation. Thanks to its chaperone activity, it also functions in the incorporation of the pyridoxal phosphate cofactor into 5-aminolevulinate synthase, thereby activating 5-aminolevulinate (ALA) synthesis, the first step in heme biosynthesis. This chaperone is also involved in the control of mtDNA nucleoid distribution, by regulating mitochondrial transcription factor A (TFAM) activity. The polypeptide is ATP-dependent clpX-like chaperone, mitochondrial (Mus musculus (Mouse)).